Consider the following 602-residue polypeptide: Probable beta-glucosidase btgE (602 aa).

An N-terminal signal peptide occupies residues 1–18 (MRGAFLAAAAAVAGTAMA). Disordered regions lie at residues 61-94 (PPTLVPINTPAPEPSSSSSSEVPSVPSSESSVVT) and 116-166 (GVDA…TSFS). Positions 74-94 (PSSSSSSEVPSVPSSESSVVT) are enriched in low complexity. Polar residues predominate over residues 152–166 (TSESPLPTPGVTSFS). E443 acts as the Proton donor in catalysis. E538 serves as the catalytic Nucleophile.

The protein belongs to the glycosyl hydrolase 17 family.

Its subcellular location is the secreted. The protein resides in the cell wall. It catalyses the reaction Hydrolysis of terminal, non-reducing beta-D-glucosyl residues with release of beta-D-glucose.. The protein operates within glycan metabolism; cellulose degradation. Functionally, beta-glucosidases are one of a number of cellulolytic enzymes involved in the degradation of cellulosic biomass. Catalyzes the last step releasing glucose from the inhibitory cellobiose. In Aspergillus flavus (strain ATCC 200026 / FGSC A1120 / IAM 13836 / NRRL 3357 / JCM 12722 / SRRC 167), this protein is Probable beta-glucosidase btgE (btgE).